We begin with the raw amino-acid sequence, 295 residues long: MNSTINNDINNDINNDINNDINNTQSNSPIEAVIFDWAGTIVDFGSFAPTTIFVESFQKEYDFAITLQEARVPMGLGKWDHIQAVGKLPSVATRWQAQFGKAMDNADIDQIYNTFIPLQKVKVVDHADPILNAINVVNDLKKQGIKIGSCSGYPRAVMDVLIPAAAENGYLPDCVVATDDLPYGGRPAPHMALKNVIELGVNSVTNCIKVDDSTPGIEEGHNAGMWTVALLLSGNEAGLTAQEYQQASVQTLNKAREKARLIMKKSNPHYLIDTINDLPAVIKEIELRLIKGERP.

The Nucleophile role is filled by Asp36. Mg(2+) contacts are provided by Asp36 and Ala38. Residue Lys78 is the Schiff-base intermediate with substrate of the active site. Residue Asp212 participates in Mg(2+) binding.

This sequence belongs to the HAD-like hydrolase superfamily. PhnX family. Homodimer. Requires Mg(2+) as cofactor.

The catalysed reaction is phosphonoacetaldehyde + H2O = acetaldehyde + phosphate + H(+). Functionally, involved in phosphonate degradation. In Psychromonas ingrahamii (strain DSM 17664 / CCUG 51855 / 37), this protein is Phosphonoacetaldehyde hydrolase.